The following is a 119-amino-acid chain: Large ribosomal subunit protein bL20 (119 aa).

The protein belongs to the bacterial ribosomal protein bL20 family.

In terms of biological role, binds directly to 23S ribosomal RNA and is necessary for the in vitro assembly process of the 50S ribosomal subunit. It is not involved in the protein synthesizing functions of that subunit. This Alkaliphilus oremlandii (strain OhILAs) (Clostridium oremlandii (strain OhILAs)) protein is Large ribosomal subunit protein bL20.